Reading from the N-terminus, the 487-residue chain is Malonate-semialdehyde dehydrogenase 2 (487 aa).

Residues Phe-154, Lys-178, Glu-181, Arg-182, and Ser-231 each coordinate NAD(+). Cys-286 serves as the catalytic Nucleophile. Residue Glu-386 coordinates NAD(+).

This sequence belongs to the aldehyde dehydrogenase family. IolA subfamily. As to quaternary structure, homotetramer.

The catalysed reaction is 3-oxopropanoate + NAD(+) + CoA + H2O = hydrogencarbonate + acetyl-CoA + NADH + H(+). The enzyme catalyses 2-methyl-3-oxopropanoate + NAD(+) + CoA + H2O = propanoyl-CoA + hydrogencarbonate + NADH + H(+). The protein operates within polyol metabolism; myo-inositol degradation into acetyl-CoA; acetyl-CoA from myo-inositol: step 7/7. Catalyzes the oxidation of malonate semialdehyde (MSA) and methylmalonate semialdehyde (MMSA) into acetyl-CoA and propanoyl-CoA, respectively. Is involved in a myo-inositol catabolic pathway. Bicarbonate, and not CO2, is the end-product of the enzymatic reaction. This chain is Malonate-semialdehyde dehydrogenase 2, found in Bacillus thuringiensis subsp. konkukian (strain 97-27).